The chain runs to 467 residues: GTPase Obg (467 aa).

The region spanning 1 to 158 (MFYDEAKIFV…RWLRLELKLL (158 aa)) is the Obg domain. The OBG-type G domain occupies 159–333 (ADVGLVGLPN…LIRATWERLQ (175 aa)). Residues 165-172 (GLPNAGKS), 190-194 (FTTLE), 214-217 (DLPG), 285-288 (NKMD), and 314-316 (SAA) contribute to the GTP site. Residues Ser-172 and Thr-192 each contribute to the Mg(2+) site. An OCT domain is found at 352–430 (TLDRSQERWE…VAGRELVWEP (79 aa)).

It belongs to the TRAFAC class OBG-HflX-like GTPase superfamily. OBG GTPase family. In terms of assembly, monomer. The cofactor is Mg(2+).

It localises to the cytoplasm. An essential GTPase which binds GTP, GDP and possibly (p)ppGpp with moderate affinity, with high nucleotide exchange rates and a fairly low GTP hydrolysis rate. Plays a role in control of the cell cycle, stress response, ribosome biogenesis and in those bacteria that undergo differentiation, in morphogenesis control. The protein is GTPase Obg of Thermomicrobium roseum (strain ATCC 27502 / DSM 5159 / P-2).